Reading from the N-terminus, the 394-residue chain is Elongation factor Tu 2 (394 aa).

In terms of domain architecture, tr-type G spans 10-204; the sequence is KPHVNVGTIG…ALDSYIPEPE (195 aa). The segment at 19–26 is G1; the sequence is GHVDHGKT. A GTP-binding site is contributed by 19 to 26; it reads GHVDHGKT. Thr26 is a Mg(2+) binding site. The segment at 60-64 is G2; sequence GITIN. The segment at 81-84 is G3; that stretch reads DCPG. Residues 81 to 85 and 136 to 139 contribute to the GTP site; these read DCPGH and NKCD. The interval 136-139 is G4; it reads NKCD. Residues 174 to 176 form a G5 region; that stretch reads SAL.

This sequence belongs to the TRAFAC class translation factor GTPase superfamily. Classic translation factor GTPase family. EF-Tu/EF-1A subfamily. As to quaternary structure, monomer.

The protein localises to the cytoplasm. The enzyme catalyses GTP + H2O = GDP + phosphate + H(+). In terms of biological role, GTP hydrolase that promotes the GTP-dependent binding of aminoacyl-tRNA to the A-site of ribosomes during protein biosynthesis. The protein is Elongation factor Tu 2 of Shewanella loihica (strain ATCC BAA-1088 / PV-4).